Consider the following 151-residue polypeptide: uncharacterized protein (151 aa).

3 4Fe-4S ferredoxin-type domains span residues 4–32 (KIIV…ESRV), 33–63 (RKVD…YLKD), and 64–93 (GIPI…IKNR). Residues C13, C16, C19, C23, C42, C45, C50, C54, C73, C76, C79, C83, C98, C101, C111, and C115 each coordinate [4Fe-4S] cluster.

The cofactor is [4Fe-4S] cluster.

This is an uncharacterized protein from Methanocaldococcus jannaschii (strain ATCC 43067 / DSM 2661 / JAL-1 / JCM 10045 / NBRC 100440) (Methanococcus jannaschii).